A 193-amino-acid chain; its full sequence is Interferon type A1/A2 (193 aa).

The first 31 residues, 1 to 31 (MAVPASPQHPRGYGILLLTLLLKALATTASA), serve as a signal peptide directing secretion. 3 disulfides stabilise this stretch: Cys32–Cys129, Cys61–Cys155, and Cys68–Cys168. 4 N-linked (GlcNAc...) asparagine glycosylation sites follow: Asn65, Asn71, Asn108, and Asn186.

It belongs to the alpha/beta interferon family.

It localises to the secreted. Has antiviral activities. This Gallus gallus (Chicken) protein is Interferon type A1/A2 (IFNA1).